A 140-amino-acid polypeptide reads, in one-letter code: 3-hydroxyacyl-[acyl-carrier-protein] dehydratase FabZ (140 aa).

His47 is an active-site residue.

Belongs to the thioester dehydratase family. FabZ subfamily.

The protein localises to the cytoplasm. It carries out the reaction a (3R)-hydroxyacyl-[ACP] = a (2E)-enoyl-[ACP] + H2O. Involved in unsaturated fatty acids biosynthesis. Catalyzes the dehydration of short chain beta-hydroxyacyl-ACPs and long chain saturated and unsaturated beta-hydroxyacyl-ACPs. In Streptococcus mutans serotype c (strain ATCC 700610 / UA159), this protein is 3-hydroxyacyl-[acyl-carrier-protein] dehydratase FabZ.